Consider the following 337-residue polypeptide: Ketol-acid reductoisomerase (NADP(+)) (337 aa).

One can recognise a KARI N-terminal Rossmann domain in the interval 3-183 (VEVFYDDDAD…GGTRAGVIKT (181 aa)). Residues 26-29 (YGSQ), Ser52, Ser54, and 84-87 (DTAQ) each bind NADP(+). Residue His109 is part of the active site. Residue Gly135 participates in NADP(+) binding. In terms of domain architecture, KARI C-terminal knotted spans 184-329 (TFTEETETDL…GRLRAMMSWV (146 aa)). 4 residues coordinate Mg(2+): Asp192, Glu196, Glu228, and Glu232. Ser253 is a substrate binding site.

The protein belongs to the ketol-acid reductoisomerase family. The cofactor is Mg(2+).

It carries out the reaction (2R)-2,3-dihydroxy-3-methylbutanoate + NADP(+) = (2S)-2-acetolactate + NADPH + H(+). The enzyme catalyses (2R,3R)-2,3-dihydroxy-3-methylpentanoate + NADP(+) = (S)-2-ethyl-2-hydroxy-3-oxobutanoate + NADPH + H(+). Its pathway is amino-acid biosynthesis; L-isoleucine biosynthesis; L-isoleucine from 2-oxobutanoate: step 2/4. It functions in the pathway amino-acid biosynthesis; L-valine biosynthesis; L-valine from pyruvate: step 2/4. Involved in the biosynthesis of branched-chain amino acids (BCAA). Catalyzes an alkyl-migration followed by a ketol-acid reduction of (S)-2-acetolactate (S2AL) to yield (R)-2,3-dihydroxy-isovalerate. In the isomerase reaction, S2AL is rearranged via a Mg-dependent methyl migration to produce 3-hydroxy-3-methyl-2-ketobutyrate (HMKB). In the reductase reaction, this 2-ketoacid undergoes a metal-dependent reduction by NADPH to yield (R)-2,3-dihydroxy-isovalerate. This Salinispora tropica (strain ATCC BAA-916 / DSM 44818 / JCM 13857 / NBRC 105044 / CNB-440) protein is Ketol-acid reductoisomerase (NADP(+)).